The primary structure comprises 276 residues: Tumor necrosis factor-inducible gene 6 protein (276 aa).

Residues 1–17 (MIILIYLFVLVWEEAQG) form the signal peptide. In terms of domain architecture, Link spans 36–129 (GVYHREARSG…SERWDAYCYN (94 aa)). Intrachain disulfides connect C58-C127, C82-C103, and C135-C161. N-linked (GlcNAc...) asparagine glycosylation is present at N118. The CUB domain maps to 135–247 (CGGVFTDPKR…GGFQIKYVTV (113 aa)). Ca(2+) contacts are provided by E183, D191, D232, S234, and V235. Residues C188 and C210 are joined by a disulfide bond. N258 carries N-linked (GlcNAc...) asparagine glycosylation.

In terms of assembly, interacts (via Link domain) with inter-alpha-inhibitor (I-alpha-I) component bikunin. Interacts with ITIH2/HC2; this interaction is required for transesterification of the HC to hyaluronan. Interacts (via Link and CUB domains) with ITIH1. Chondroitin sulfate may be required for the stability of the complex. Interacts (via Link domain) with various C-X-C and C-C chemokines including PF4, CXCL8, CXCL11, CXCL12, CCL2, CCL7, CCL19, CCL21, and CCL27; this interaction interferes with chemokine binding to glycosaminoglycans. Interacts (primarily via Link domain) with BMP2; this interaction is inhibited by hyaluronan. Interacts (via both Link and CUB domains) with TNFSF11. Interacts (via CUB domain) with FN1 (via type III repeats 9-14); this interaction enhances fibronectin fibril assembly. TNFAIP6 may act as a bridging molecule between FN1 and THBS1. Vascular smooth muscle cells.

It is found in the secreted. In terms of biological role, major regulator of extracellular matrix organization during tissue remodeling. Catalyzes the transfer of a heavy chain (HC) from inter-alpha-inhibitor (I-alpha-I) complex to hyaluronan. Cleaves the ester bond between the C-terminus of the HC and GalNAc residue of the chondroitin sulfate chain in I-alpha-I complex followed by transesterification of the HC to hyaluronan. In the process, potentiates the antiprotease function of I-alpha-I complex through release of free bikunin. Acts as a catalyst in the formation of hyaluronan-HC oligomers and hyaluronan-rich matrix surrounding the cumulus cell-oocyte complex, a necessary step for oocyte fertilization. Assembles hyaluronan in pericellular matrices that serve as platforms for receptor clustering and signaling. Enables binding of hyaluronan deposited on the surface of macrophages to LYVE1 on lymphatic endothelium and facilitates macrophage extravasation. Alters hyaluronan binding to functionally latent CD44 on vascular endothelium, switching CD44 into an active state that supports leukocyte rolling. Modulates the interaction of chemokines with extracellular matrix components and proteoglycans on endothelial cell surface, likely preventing chemokine gradient formation. In a negative feedback mechanism, may limit excessive neutrophil recruitment at inflammatory sites by antagonizing the association of CXCL8 with glycosaminoglycans on vascular endothelium. Has a role in osteogenesis and bone remodeling. Inhibits BMP2-dependent differentiation of mesenchymal stem cell to osteoblasts. Protects against bone erosion during inflammation by inhibiting TNFSF11/RANKL-dependent osteoclast activation. This chain is Tumor necrosis factor-inducible gene 6 protein (TNFAIP6), found in Oryctolagus cuniculus (Rabbit).